Here is a 61-residue protein sequence, read N- to C-terminus: Putative antitoxin VapB13 (61 aa).

Belongs to the UPF0165 family.

Its function is as follows. Possibly the antitoxin component of a type II toxin-antitoxin (TA) system. Its cognate toxin is VapC13 (Potential). The polypeptide is Putative antitoxin VapB13 (vapB13) (Archaeoglobus fulgidus (strain ATCC 49558 / DSM 4304 / JCM 9628 / NBRC 100126 / VC-16)).